Reading from the N-terminus, the 433-residue chain is Enolase (433 aa).

Position 167 (Gln-167) interacts with (2R)-2-phosphoglycerate. Glu-209 functions as the Proton donor in the catalytic mechanism. Mg(2+) is bound by residues Asp-246, Glu-291, and Asp-318. Positions 343, 372, 373, and 394 each coordinate (2R)-2-phosphoglycerate. Residue Lys-343 is the Proton acceptor of the active site.

It belongs to the enolase family. As to quaternary structure, component of the RNA degradosome, a multiprotein complex involved in RNA processing and mRNA degradation. It depends on Mg(2+) as a cofactor.

The protein resides in the cytoplasm. The protein localises to the secreted. It is found in the cell surface. The catalysed reaction is (2R)-2-phosphoglycerate = phosphoenolpyruvate + H2O. The protein operates within carbohydrate degradation; glycolysis; pyruvate from D-glyceraldehyde 3-phosphate: step 4/5. Its function is as follows. Catalyzes the reversible conversion of 2-phosphoglycerate (2-PG) into phosphoenolpyruvate (PEP). It is essential for the degradation of carbohydrates via glycolysis. The protein is Enolase of Photorhabdus laumondii subsp. laumondii (strain DSM 15139 / CIP 105565 / TT01) (Photorhabdus luminescens subsp. laumondii).